The chain runs to 210 residues: Fibroblast growth factor 21 (210 aa).

Residues M1–Q28 form the signal peptide. The tract at residues P144 to S210 is disordered.

This sequence belongs to the heparin-binding growth factors family. In terms of assembly, interacts (via C-terminus) with KLB; this interaction is direct. Interacts with FGFR4. In terms of tissue distribution, most abundantly expressed in the liver, also expressed in the thymus at lower levels. Expressed in skeletal muscle (at protein level). Secreted in plasma (at protein level).

Its subcellular location is the secreted. Stimulates glucose uptake in differentiated adipocytes via the induction of glucose transporter SLC2A1/GLUT1 expression (but not SLC2A4/GLUT4 expression). Activity probably requires the presence of KLB. Regulates systemic glucose homeostasis and insulin sensitivity. The polypeptide is Fibroblast growth factor 21 (Fgf21) (Mus musculus (Mouse)).